The following is a 749-amino-acid chain: Replication restart protein PriA (749 aa).

Residues 224–391 (SLKTSQFHTH…LSGKYVLSRL (168 aa)) enclose the Helicase ATP-binding domain. 237 to 244 (GITGSGKT) lines the ATP pocket. Residues 333–336 (DEEH) carry the DEAH box motif. Zn(2+)-binding residues include C454, C457, C463, C466, C481, C484, C495, and C498. One can recognise a Helicase C-terminal domain in the interval 490-658 (DLPQSCPKCL…EYPPFIRLIR (169 aa)).

It belongs to the helicase family. PriA subfamily. Component of the replication restart primosome. Zn(2+) serves as cofactor.

The catalysed reaction is Couples ATP hydrolysis with the unwinding of duplex DNA by translocating in the 3'-5' direction.. It carries out the reaction ATP + H2O = ADP + phosphate + H(+). Functionally, initiates the restart of stalled replication forks, which reloads the replicative helicase on sites other than the origin of replication. Recognizes and binds to abandoned replication forks and remodels them to uncover a helicase loading site. Promotes assembly of the primosome at these replication forks. In Chlamydia pneumoniae (Chlamydophila pneumoniae), this protein is Replication restart protein PriA.